Consider the following 159-residue polypeptide: Phosphopantetheine adenylyltransferase (159 aa).

T10 contributes to the substrate binding site. ATP is bound by residues 10-11 and H18; that span reads TF. K42, L74, and R88 together coordinate substrate. Residues 89 to 91, E99, and 124 to 130 each bind ATP; these read GLR and YAFISSS.

Belongs to the bacterial CoaD family. In terms of assembly, homohexamer. Requires Mg(2+) as cofactor.

The protein localises to the cytoplasm. It carries out the reaction (R)-4'-phosphopantetheine + ATP + H(+) = 3'-dephospho-CoA + diphosphate. Its pathway is cofactor biosynthesis; coenzyme A biosynthesis; CoA from (R)-pantothenate: step 4/5. Reversibly transfers an adenylyl group from ATP to 4'-phosphopantetheine, yielding dephospho-CoA (dPCoA) and pyrophosphate. In Hydrogenovibrio crunogenus (strain DSM 25203 / XCL-2) (Thiomicrospira crunogena), this protein is Phosphopantetheine adenylyltransferase.